A 185-amino-acid chain; its full sequence is NAD(P)H-dependent FMN reductase PA1204 (185 aa).

FMN contacts are provided by residues 13-20 (SLRSGSYN) and 81-83 (YNY). 115 to 122 (SAGRFGTA) provides a ligand contact to NAD(+).

Belongs to the SsuE family. As to quaternary structure, homodimer. FMN is required as a cofactor.

In terms of biological role, has NAD(P)H-dependent FMN reductase activity. The chain is NAD(P)H-dependent FMN reductase PA1204 from Pseudomonas aeruginosa (strain ATCC 15692 / DSM 22644 / CIP 104116 / JCM 14847 / LMG 12228 / 1C / PRS 101 / PAO1).